Here is a 429-residue protein sequence, read N- to C-terminus: MNNIVDTAIEAIVAREILDSRGRPTIEAEVHLLSGAVGLAQVPSGASTGTFEAHELRDKDKSRYGGKGVLKAVHNVNEILAPKLIDLDALNQELIDRTMIALDGSGNKSNLGANAILAVSLAAARAGAESLGIPLYRYLGGPLANLLPVPLMNVINGGAHASNNVDFQEFMIVPVGATSFREALRWGAEVFATLSEVLHDKGLLTGVGDEGGFAPNLESNQVALELLVAAIEKAGYKPGEQVALALDVAASEFYKEGQYVYDGRPHAPTEFIDYLGQLVDQYPIVSIEDGLHEEDWQHWQLLTQKVGSRVQLVGDDLFVTNATRLQKGIQEKAGNAILIKLNQIGSLTETLETIDLGTRNGFRSVISHRSGETEDTTIADLAVATRAGQIKTGSLCRSERVAKYNRLLRIEDELGDRAVYAGAVGLGPK.

Gln-168 contributes to the (2R)-2-phosphoglycerate binding site. Residue Glu-210 is the Proton donor of the active site. Residues Asp-247, Glu-288, and Asp-315 each coordinate Mg(2+). Lys-340, Arg-369, Ser-370, and Lys-391 together coordinate (2R)-2-phosphoglycerate. Lys-340 (proton acceptor) is an active-site residue.

Belongs to the enolase family. Mg(2+) is required as a cofactor.

Its subcellular location is the cytoplasm. It localises to the secreted. It is found in the cell surface. It carries out the reaction (2R)-2-phosphoglycerate = phosphoenolpyruvate + H2O. Its pathway is carbohydrate degradation; glycolysis; pyruvate from D-glyceraldehyde 3-phosphate: step 4/5. Its function is as follows. Catalyzes the reversible conversion of 2-phosphoglycerate (2-PG) into phosphoenolpyruvate (PEP). It is essential for the degradation of carbohydrates via glycolysis. The chain is Enolase from Nostoc sp. (strain PCC 7120 / SAG 25.82 / UTEX 2576).